The sequence spans 431 residues: Adenylosuccinate synthetase (431 aa).

GTP is bound by residues 13-19 (GDEGKGK) and 41-43 (GHT). The active-site Proton acceptor is Asp14. Mg(2+)-binding residues include Asp14 and Gly41. IMP is bound by residues 14–17 (DEGK), 39–42 (NAGH), Thr130, Arg144, Gln225, Thr240, and Arg304. The active-site Proton donor is the His42. Residue 300–306 (ATTGRKR) participates in substrate binding. Residues Arg306, 332–334 (KLD), and 415–417 (STG) contribute to the GTP site.

The protein belongs to the adenylosuccinate synthetase family. As to quaternary structure, homodimer. Requires Mg(2+) as cofactor.

Its subcellular location is the cytoplasm. The catalysed reaction is IMP + L-aspartate + GTP = N(6)-(1,2-dicarboxyethyl)-AMP + GDP + phosphate + 2 H(+). It functions in the pathway purine metabolism; AMP biosynthesis via de novo pathway; AMP from IMP: step 1/2. Its function is as follows. Plays an important role in the de novo pathway of purine nucleotide biosynthesis. Catalyzes the first committed step in the biosynthesis of AMP from IMP. The chain is Adenylosuccinate synthetase from Shewanella loihica (strain ATCC BAA-1088 / PV-4).